Consider the following 312-residue polypeptide: MPQQSMQASLRDPIAEIERSNCKIAHLRLGLVFTSDNNERALQDSGLYSPDSEDSSVDIAGRRFHSGTLNGSSIVYVKTGSHSVNMATTLQILLARFSIHGVIYFGNAGSLDKKTMVPGDVSVPQAVAFTGVCNWKKFRSEKGKLVFGDFNYPENGENLLGTVEYEKIKMFSPSEAPKEVFWLPITKSWYNAATEALKDMKLRKCYSDECLPGEPKVVFGSKSSTSDFYVRNKAYGDFLNDNFDAKTADTTSASVALTSLSNEKLFVVFQGVSNVAGETSSNSRVSYLASYNAFLAATKFINSIPTPRLACE.

Residues 1-24 form the signal peptide; it reads MPQQSMQASLRDPIAEIERSNCKI. N70 is a glycosylation site (N-linked (GlcNAc...) asparagine).

It to wound-inducible poplar endochitinases. In terms of assembly, monomer. Bark tissue.

Functionally, may play a role in nitrogen storage. The sequence is that of Bark storage protein B (BSP) from Populus deltoides (Eastern poplar).